We begin with the raw amino-acid sequence, 191 residues long: Recombination protein RecR (191 aa).

Residues 56-71 (CQNCNFLQSNNICHFC) form a C4-type zinc finger. The Toprim domain occupies 78-170 (KQLMIFETTS…KVTKLAQGLP (93 aa)).

The protein belongs to the RecR family.

In terms of biological role, may play a role in DNA repair. It seems to be involved in an RecBC-independent recombinational process of DNA repair. It may act with RecF and RecO. This chain is Recombination protein RecR, found in Mycoplasmopsis pulmonis (strain UAB CTIP) (Mycoplasma pulmonis).